The sequence spans 279 residues: Oxygen-dependent coproporphyrinogen-III oxidase (279 aa).

S102 provides a ligand contact to substrate. A divalent metal cation is bound by residues H106 and H116. H116 acts as the Proton donor in catalysis. A substrate-binding site is contributed by 118-120 (NTR). A divalent metal cation contacts are provided by H149 and H179. The important for dimerization stretch occupies residues 244–279 (YVEFNLLYDRGTKFGLMTDGNVEAILMSLPPEVKFN).

This sequence belongs to the aerobic coproporphyrinogen-III oxidase family. As to quaternary structure, homodimer. A divalent metal cation serves as cofactor.

It localises to the cytoplasm. The enzyme catalyses coproporphyrinogen III + O2 + 2 H(+) = protoporphyrinogen IX + 2 CO2 + 2 H2O. Its pathway is porphyrin-containing compound metabolism; protoporphyrin-IX biosynthesis; protoporphyrinogen-IX from coproporphyrinogen-III (O2 route): step 1/1. Involved in the heme biosynthesis. Catalyzes the aerobic oxidative decarboxylation of propionate groups of rings A and B of coproporphyrinogen-III to yield the vinyl groups in protoporphyrinogen-IX. This is Oxygen-dependent coproporphyrinogen-III oxidase from Rickettsia africae (strain ESF-5).